A 421-amino-acid chain; its full sequence is Tyrosine--tRNA ligase (421 aa).

Y35 is an L-tyrosine binding site. Residues 40–49 (PTADSLHIGH) carry the 'HIGH' region motif. Y170 and Q174 together coordinate L-tyrosine. A 'KMSKS' region motif is present at residues 232–236 (KFGKT). K235 contacts ATP. Residues 355-421 (LSLVDVLVES…GKKKYFLITY (67 aa)) form the S4 RNA-binding domain.

This sequence belongs to the class-I aminoacyl-tRNA synthetase family. TyrS type 1 subfamily. Homodimer.

It localises to the cytoplasm. The enzyme catalyses tRNA(Tyr) + L-tyrosine + ATP = L-tyrosyl-tRNA(Tyr) + AMP + diphosphate + H(+). Its function is as follows. Catalyzes the attachment of tyrosine to tRNA(Tyr) in a two-step reaction: tyrosine is first activated by ATP to form Tyr-AMP and then transferred to the acceptor end of tRNA(Tyr). The chain is Tyrosine--tRNA ligase from Bacillus velezensis (strain DSM 23117 / BGSC 10A6 / LMG 26770 / FZB42) (Bacillus amyloliquefaciens subsp. plantarum).